Consider the following 474-residue polypeptide: MSEGTLYDKVWENHKVTTLPNGQDQLFVGLHLIHEVTSPQAFGMLRERDIEVARPDLTHATVDHIVPTADQSRPLDNEAAEEMMAELEENVREAGITLDDPTTGNQGIVHVIGPEQGLTQPGKTIVCGDSHTSTHGAFGALAFGIGTSQIRDVLATQTIAMEKKDVRKIEVTGELGEGVTAKDIILTIIRRLGTDGGVGYVYEYAGEAIENLGMEGRMSICNMSIEGGARAGYVNPDETTYEWLRETDAFADDPERFEELKPYWESVRSDPDAEYDDVVTIDGSEIEPVVTWGTTPGQGIGITEEIPAPEDLPADKQDTARRAQDHMGVEPGETMAGYNIDVAFLGSCTNARLPDLRSAAEIIKGREVHDSVRAMVVPGSQRVKAAAEDEGLDSVFKEAGFDWREAGCSMCLGMNDDQLVGDEACASSSNRNFVGRQGSKDGRTVLMSPEMVAAAAVTGEVTDVRELPKAEVEA.

The disordered stretch occupies residues 293–313 (GTTPGQGIGITEEIPAPEDLP). [4Fe-4S] cluster-binding residues include C348, C408, and C411.

Belongs to the aconitase/IPM isomerase family. LeuC type 1 subfamily. Heterodimer of LeuC and LeuD. [4Fe-4S] cluster is required as a cofactor.

It carries out the reaction (2R,3S)-3-isopropylmalate = (2S)-2-isopropylmalate. It functions in the pathway amino-acid biosynthesis; L-leucine biosynthesis; L-leucine from 3-methyl-2-oxobutanoate: step 2/4. Catalyzes the isomerization between 2-isopropylmalate and 3-isopropylmalate, via the formation of 2-isopropylmaleate. The sequence is that of 3-isopropylmalate dehydratase large subunit from Natronomonas pharaonis (strain ATCC 35678 / DSM 2160 / CIP 103997 / JCM 8858 / NBRC 14720 / NCIMB 2260 / Gabara) (Halobacterium pharaonis).